Reading from the N-terminus, the 337-residue chain is tRNA N6-adenosine threonylcarbamoyltransferase (337 aa).

Fe cation is bound by residues His-111 and His-115. Substrate is bound by residues 134-138, Asp-167, Gly-180, and Asn-272; that span reads LVSGG. Position 300 (Asp-300) interacts with Fe cation.

It belongs to the KAE1 / TsaD family. It depends on Fe(2+) as a cofactor.

The protein resides in the cytoplasm. The catalysed reaction is L-threonylcarbamoyladenylate + adenosine(37) in tRNA = N(6)-L-threonylcarbamoyladenosine(37) in tRNA + AMP + H(+). Required for the formation of a threonylcarbamoyl group on adenosine at position 37 (t(6)A37) in tRNAs that read codons beginning with adenine. Is involved in the transfer of the threonylcarbamoyl moiety of threonylcarbamoyl-AMP (TC-AMP) to the N6 group of A37, together with TsaE and TsaB. TsaD likely plays a direct catalytic role in this reaction. This chain is tRNA N6-adenosine threonylcarbamoyltransferase, found in Methylococcus capsulatus (strain ATCC 33009 / NCIMB 11132 / Bath).